The sequence spans 353 residues: MTDFSQIHKPVLLQECVDLVTPALHASDSVAVDCTLGLAGHTIAFLKAAPNATVIGIDRDEEALDKATARIAQEGLSARFVPVHAAFDQFDEVLRAQGVSRVQAVFMDLGLSSLQIDERERGFSYAHDAPLDMRMDTSQALTAREILATYDADRLAHIFKEYGEERFSKPIAKRIVQQRQSSPLETSSQLTALVDAVIPAARRGSGNPAKRVFQALRIEVNGELDKLRRTLPQIGLHLAVGGRLVVESYHSLEDRTVKNFMAQGLRVDAPADMPVIPPDMQPFFKALTKGAVKADAGEIAYNPRSASVRLRAVELTRPLPQRWVHAFELESQGSEDGVRGAHGHRRRTQARRG.

S-adenosyl-L-methionine is bound by residues 39-41 (AGH), Asp-58, Phe-90, Asp-108, and Gln-115. The segment at 334 to 353 (SEDGVRGAHGHRRRTQARRG) is disordered. Residues 341 to 353 (AHGHRRRTQARRG) are compositionally biased toward basic residues.

This sequence belongs to the methyltransferase superfamily. RsmH family.

Its subcellular location is the cytoplasm. It catalyses the reaction cytidine(1402) in 16S rRNA + S-adenosyl-L-methionine = N(4)-methylcytidine(1402) in 16S rRNA + S-adenosyl-L-homocysteine + H(+). Its function is as follows. Specifically methylates the N4 position of cytidine in position 1402 (C1402) of 16S rRNA. The sequence is that of Ribosomal RNA small subunit methyltransferase H from Bifidobacterium animalis subsp. lactis (strain AD011).